A 429-amino-acid chain; its full sequence is E3 ubiquitin-protein ligase ZNRF4 (429 aa).

The first 27 residues, 1 to 27 (MPLCRPEHLMPRASRVPVAASLPLSHA), serve as a signal peptide directing secretion. The Lumenal portion of the chain corresponds to 28-250 (VIPTQLPSRP…PPCHDLGCHP (223 aa)). A disordered region spans residues 30–67 (PTQLPSRPGHRPPGRPRRCPKASCLPPPVGPSSTQTAK). Over residues 37 to 49 (PGHRPPGRPRRCP) the composition is skewed to basic residues. Asparagine 107, asparagine 152, and asparagine 229 each carry an N-linked (GlcNAc...) asparagine glycan. A PA domain is found at 151 to 223 (GNRSLGAIVL…VSEAASQDLR (73 aa)). Residues 251–271 (VLTVSWVLGCTLALVVSAFFV) form a helical membrane-spanning segment. Topologically, residues 272 to 429 (LNHLWLWAQA…SSAPPEAPGQ (158 aa)) are cytoplasmic. The RING-type; atypical zinc finger occupies 309–352 (CAICLDEYEEGDQLKILPCSHTYHCKCIDPWFSQAPRRSCPVCK).

In terms of assembly, interacts with CANX.

Its subcellular location is the endoplasmic reticulum membrane. It catalyses the reaction S-ubiquitinyl-[E2 ubiquitin-conjugating enzyme]-L-cysteine + [acceptor protein]-L-lysine = [E2 ubiquitin-conjugating enzyme]-L-cysteine + N(6)-ubiquitinyl-[acceptor protein]-L-lysine.. Its pathway is protein modification; protein ubiquitination. Functionally, E3 ubiquitin-protein ligase that acts as a negative regulator of NOD2 signaling by mediating ubiquitination and degradation of RIPK2. Also catalyzes ubiquitination and proteasomal degradation of CANX within the endoplasmic reticulum. Could have a role in spermatogenesis. The polypeptide is E3 ubiquitin-protein ligase ZNRF4 (Homo sapiens (Human)).